The primary structure comprises 349 residues: Heparin sulfate O-sulfotransferase (349 aa).

Topologically, residues 1 to 17 (MFRKLLKMWILLRPTHW) are cytoplasmic. A helical; Signal-anchor for type II membrane protein transmembrane segment spans residues 18 to 38 (LILIALCAVTCAGYWLLWSEI). Residues 39–349 (RLEHAFKPLS…KFMYEKIRPK (311 aa)) lie on the Lumenal side of the membrane. N-linked (GlcNAc...) asparagine glycans are attached at residues Asn107 and Asn126. Residues His139 and His141 contribute to the active site. Cystine bridges form between Cys200/Cys208 and Cys221/Cys227. Asn282 carries N-linked (GlcNAc...) asparagine glycosylation.

It belongs to the sulfotransferase 3 family. In terms of assembly, homotrimer.

It localises to the golgi apparatus membrane. In terms of biological role, catalyzes the transfer of sulfate to the C2-position of selected hexuronic acid residues within the maturing heparan sulfate (HS). The chain is Heparin sulfate O-sulfotransferase from Drosophila melanogaster (Fruit fly).